Reading from the N-terminus, the 630-residue chain is Protein zwilch homolog (630 aa).

Belongs to the ZWILCH family. Component of the RZZ complex composed of rod-1, czw-1 and zwl-1. Interacts with the spindly-like protein spdl-1. Interacts with NDC80 complex component ndc-80.

Its subcellular location is the cytoplasm. The protein resides in the cell cortex. It localises to the chromosome. It is found in the centromere. The protein localises to the kinetochore. Its subcellular location is the cytoskeleton. The protein resides in the spindle. Functionally, essential component of the mitotic checkpoint, which prevents cells from prematurely exiting mitosis. Required for chromosome segregation, the assembly of the dynein-dynactin and mdf-1-mdf-2 complexes onto kinetochores and spindle pole separation. Its function related to the spindle assembly machinery and kinetochore-microtubule attachments likely depends on its association in the mitotic RZZ complex. The RZZ complex recruits the spindly-like protein spdl-1 to kinetochores. To prevent irregular chromosome segregation, the complex also inhibits the attachment of the kinetochore-associated NDC80 complex to microtubules. The recruitment of spdl-1 to kinetochores relieves this inhibition. Required for embryonic development. This is Protein zwilch homolog (zwl-1) from Caenorhabditis elegans.